The chain runs to 523 residues: 2-isopropylmalate synthase (523 aa).

Residues 5–267 form the Pyruvate carboxyltransferase domain; that stretch reads VIIFDTTLRD…HTAINHQEIW (263 aa). The Mn(2+) site is built by Asp14, His202, His204, and Asn238. A regulatory domain region spans residues 392–523; that stretch reads RLDYFSVQSS…QHNENNKETV (132 aa).

Belongs to the alpha-IPM synthase/homocitrate synthase family. LeuA type 1 subfamily. Homodimer. It depends on Mn(2+) as a cofactor.

It is found in the cytoplasm. The enzyme catalyses 3-methyl-2-oxobutanoate + acetyl-CoA + H2O = (2S)-2-isopropylmalate + CoA + H(+). The protein operates within amino-acid biosynthesis; L-leucine biosynthesis; L-leucine from 3-methyl-2-oxobutanoate: step 1/4. Its function is as follows. Catalyzes the condensation of the acetyl group of acetyl-CoA with 3-methyl-2-oxobutanoate (2-ketoisovalerate) to form 3-carboxy-3-hydroxy-4-methylpentanoate (2-isopropylmalate). This Shigella dysenteriae serotype 1 (strain Sd197) protein is 2-isopropylmalate synthase.